A 518-amino-acid polypeptide reads, in one-letter code: Triacylglycerol lipase OBL1 (518 aa).

A helical transmembrane segment spans residues 93–113 (GFVVDFFLNLFSANGGFFGLL). The GXSXG signature appears at 337-341 (GHSLG). Serine 339 serves as the catalytic Nucleophile. Residues aspartate 403 and histidine 496 each act as charge relay system in the active site.

The protein belongs to the AB hydrolase superfamily. Lipase family. As to expression, expressed in pollen grains, pollen tubes, developing embryos, developing seeds and germinating seeds.

Its subcellular location is the lipid droplet. The protein resides in the membrane. The catalysed reaction is 1,2-di-(9Z-octadecenoyl)-glycerol + (9Z)-octadecenoate + H(+) = 1,2,3-tri-(9Z-octadecenoyl)-glycerol + H2O. It catalyses the reaction 1-(9Z-octadecenoyl)-glycerol + H2O = glycerol + (9Z)-octadecenoate + H(+). In terms of biological role, acid lipase that can hydrolyze a range of triacylglycerols without a clear preference for acyl-chains. Can also cleave 1,2-diacylglycerol, 1,3-diacylglycerol and 1-monoacylglycerol, but not phosphatidylcholine, phosphatidylethanolamine, or sterol esters. Required for pollen tube growth. Triacylglycerol hydrolysis by OBL1 may provide acyl groups for the synthesis of membrane lipids in growing pollen tubes. This is Triacylglycerol lipase OBL1 from Arabidopsis thaliana (Mouse-ear cress).